The sequence spans 274 residues: Putative 2-succinyl-6-hydroxy-2,4-cyclohexadiene-1-carboxylate synthase (274 aa).

The AB hydrolase-1 domain maps to 26–259; the sequence is AVVCLHGFTG…KAGHTVHVEQ (234 aa).

This sequence belongs to the AB hydrolase superfamily. MenH family. Monomer.

The catalysed reaction is 5-enolpyruvoyl-6-hydroxy-2-succinyl-cyclohex-3-ene-1-carboxylate = (1R,6R)-6-hydroxy-2-succinyl-cyclohexa-2,4-diene-1-carboxylate + pyruvate. It functions in the pathway quinol/quinone metabolism; 1,4-dihydroxy-2-naphthoate biosynthesis; 1,4-dihydroxy-2-naphthoate from chorismate: step 3/7. It participates in quinol/quinone metabolism; menaquinone biosynthesis. Functionally, catalyzes a proton abstraction reaction that results in 2,5-elimination of pyruvate from 2-succinyl-5-enolpyruvyl-6-hydroxy-3-cyclohexene-1-carboxylate (SEPHCHC) and the formation of 2-succinyl-6-hydroxy-2,4-cyclohexadiene-1-carboxylate (SHCHC). The chain is Putative 2-succinyl-6-hydroxy-2,4-cyclohexadiene-1-carboxylate synthase from Bacillus subtilis (strain 168).